Reading from the N-terminus, the 287-residue chain is Maleylpyruvate hydrolase (287 aa).

The a divalent metal cation site is built by E143, E145, and D174.

It belongs to the FAH family. In terms of assembly, homodimer.

It catalyses the reaction 3-maleylpyruvate + H2O = maleate + pyruvate + H(+). With respect to regulation, activated by Mn(2+). Inhibited by Ni(2+), Cd(2+), Co(2+) or Cu(2+). In terms of biological role, involved in the degradation of gentisate. Catalyzes the hydrolysis of 3-maleylpyruvate, the ring-cleavage product of gentisate. This is Maleylpyruvate hydrolase from Aquipseudomonas alcaligenes (Pseudomonas alcaligenes).